The primary structure comprises 89 residues: Endoribonuclease VapD 1 (89 aa).

It belongs to the VapD ribonuclease family. In terms of assembly, homodimer.

Functionally, cleaves ssRNA, mostly between U:A. The chain is Endoribonuclease VapD 1 from Riemerella anatipestifer (Moraxella anatipestifer).